Here is a 435-residue protein sequence, read N- to C-terminus: MFESLWLQLQHPNTQWVLAGTLLLGTASGVLGSFVLLRKQSLIGDAMAHSALPGVCLAFLFTGQKSLPFFLLGAALAGLLGTFCIQLIPRLSKTKEDSAIGIVLSVFFGVGIILLTYIQQQGAGSQSGLDSFLFGQAASLVRQDIILIAGISAVLLLLCIVFFKEFTLITFDLAFAKGLGIPVRFLNGLLACLIVCAVVIGLQTVGVILMAAMLITPAITARYWTERLTGMIIIAGITGGVSGVAGTLLSTTMKGMATGPLMILSATLLFLFSMICAPKRGLAAKAIRLMRLRRRTSREQVLLAIYEQYEKNNLCVTVESVRKKRRLSPSLCLKALNDLEQERCIERIENGIWQITSKGIEKGYHTALKQRMYEVYLMHEMELANIESDQDYFDPDRLPRETRERLYSLLKLYGRMPERRKASHDAEKGQIANEF.

The next 9 membrane-spanning stretches (helical) occupy residues 17 to 37 (VLAGTLLLGTASGVLGSFVLL), 42 to 62 (LIGDAMAHSALPGVCLAFLFT), 68 to 88 (PFFLLGAALAGLLGTFCIQLI), 98 to 118 (SAIGIVLSVFFGVGIILLTYI), 143 to 163 (QDIILIAGISAVLLLLCIVFF), 166 to 186 (FTLITFDLAFAKGLGIPVRFL), 189 to 209 (LLACLIVCAVVIGLQTVGVIL), 228 to 248 (LTGMIIIAGITGGVSGVAGTL), and 255 to 275 (GMATGPLMILSATLLFLFSMI).

Belongs to the ABC-3 integral membrane protein family. As to quaternary structure, the complex is probably composed of two ATP-binding proteins (MntB), two transmembrane proteins (MntC and MntD) and a solute-binding protein (MntA).

It is found in the cell membrane. Probably part of the ABC transporter complex MntABCD involved in manganese import. Probably responsible for the translocation of the substrate across the membrane. The chain is Manganese transport system membrane protein MntC from Bacillus subtilis (strain 168).